We begin with the raw amino-acid sequence, 164 residues long: Large ribosomal subunit protein bL9 (164 aa).

It belongs to the bacterial ribosomal protein bL9 family.

In terms of biological role, binds to the 23S rRNA. The chain is Large ribosomal subunit protein bL9 from Psychrobacter sp. (strain PRwf-1).